Here is a 187-residue protein sequence, read N- to C-terminus: Elongation factor P (187 aa).

It belongs to the elongation factor P family.

It is found in the cytoplasm. Its pathway is protein biosynthesis; polypeptide chain elongation. Functionally, involved in peptide bond synthesis. Stimulates efficient translation and peptide-bond synthesis on native or reconstituted 70S ribosomes in vitro. Probably functions indirectly by altering the affinity of the ribosome for aminoacyl-tRNA, thus increasing their reactivity as acceptors for peptidyl transferase. This Magnetococcus marinus (strain ATCC BAA-1437 / JCM 17883 / MC-1) protein is Elongation factor P.